Here is a 72-residue protein sequence, read N- to C-terminus: uncharacterized protein (72 aa).

Belongs to the asfivirus I73R family.

The protein localises to the virion. This is an uncharacterized protein from Ornithodoros (relapsing fever ticks).